A 931-amino-acid polypeptide reads, in one-letter code: NEDD4-binding protein 1 (931 aa).

One can recognise a KH-like domain in the interval 75–159; sequence GKAVRSAKEY…VQQFVKLFEN (85 aa). Disordered stretches follow at residues 289 to 329, 413 to 474, and 547 to 571; these read MTSK…HNDS, QEWS…TQVD, and CTSA…NSHS. 2 stretches are compositionally biased toward basic and acidic residues: residues 290–309 and 319–329; these read TSKE…ESLP and QEVKSVSHNDS. The span at 416 to 434 shows a compositional bias: polar residues; sequence SSKTPKTTNLRLGSNANSS. 2 stretches are compositionally biased toward basic and acidic residues: residues 435-444 and 456-467; these read HKLEDEDISC and NETRTERHKARD. Residues 547-557 show a composition bias toward polar residues; it reads CTSAKSKTAVH. Residues 659-811 form the RNase NYN domain; it reads LKHIIIDGSN…LGRNGPRLDD (153 aa). The disordered stretch occupies residues 841-863; the sequence is LFMHVPNPASSSQQPKNRAHGDH. The interval 884–931 is coCUN; the sequence is RSASETVWLREALIKIFPDYEQRQKIDKILADHPFMRDLNALSAMVLD.

This sequence belongs to the N4BP1 family.

It is found in the cytoplasm. It localises to the cytosol. The protein resides in the nucleus. Its subcellular location is the nucleolus. The protein localises to the PML body. In terms of biological role, potent suppressor of cytokine production that acts as a regulator of innate immune signaling and inflammation. Acts as a key negative regulator of select cytokine and chemokine responses elicited by TRIF-independent Toll-like receptors (TLRs), thereby limiting inflammatory cytokine responses to minor insults. Has ribonuclease activity. The sequence is that of NEDD4-binding protein 1 from Gallus gallus (Chicken).